A 129-amino-acid polypeptide reads, in one-letter code: uncharacterized protein (129 aa).

Residues 6–129 enclose the VOC domain; it reads QVHHIAIIAT…DGLPLELYEQ (124 aa). A divalent metal cation is bound by residues His9, Glu57, His78, and Glu125.

This sequence to B.subtilis YwkD.

This is an uncharacterized protein from Escherichia coli (strain K12).